Reading from the N-terminus, the 301-residue chain is MLKQMTVNSIIQYIEENLESKFINIDCLVLYSGFSRRYLQISFKEYVGMPIGTYIRVRRASRAAALLRLTRLTIIEISAKLFYDSQQTFTREFKKIFGYTPRQYRMIPFWSFKGLLGRREINCEYLQPRICYLKERNIIGQCFNFRDLVFYSGIDSKCRLGKLYDSLKKNTAITVSNRIPFHDKTNDIIARTVVWDRNKHFSDSEIKVDKGLYAYFFFNDTYDQYVHHMYNIYYNSLPIYNLNKRDGYDVEVIKRRNDNTIDCHYFLPIYCDDMEFYNEMQVYHNNIVKPEMSVTLGLPKS.

The 100-residue stretch at 8-107 folds into the HTH araC/xylS-type domain; it reads NSIIQYIEEN…GYTPRQYRMI (100 aa). 2 DNA-binding regions (H-T-H motif) span residues 26 to 47 and 74 to 97; these read DCLVLYSGFSRRYLQISFKEYV and IIEISAKLFYDSQQTFTREFKKIF.

Functionally, positive regulator of F1 operon expression. In Yersinia pestis, this protein is F1 operon positive regulatory protein (caf1R).